The primary structure comprises 316 residues: Ribosomal protein L11 methyltransferase (316 aa).

S-adenosyl-L-methionine is bound by residues T163, G184, D206, and N249.

The protein belongs to the methyltransferase superfamily. PrmA family.

The protein localises to the cytoplasm. The enzyme catalyses L-lysyl-[protein] + 3 S-adenosyl-L-methionine = N(6),N(6),N(6)-trimethyl-L-lysyl-[protein] + 3 S-adenosyl-L-homocysteine + 3 H(+). Methylates ribosomal protein L11. The sequence is that of Ribosomal protein L11 methyltransferase from Pediococcus pentosaceus (strain ATCC 25745 / CCUG 21536 / LMG 10740 / 183-1w).